We begin with the raw amino-acid sequence, 223 residues long: Sigma non-opioid intracellular receptor 1 (223 aa).

Residues 1-9 (MCWAVGRRW) lie on the Lumenal side of the membrane. The targeting to endoplasmic reticulum-associated lipid droplets stretch occupies residues 2-8 (CWAVGRR). Residues 10-30 (AWAALLLAVAAVLAQVVWLWL) form a helical membrane-spanning segment. Residues 31–223 (GTQSFVFQHE…LTTYLFGQDA (193 aa)) lie on the Cytoplasmic side of the membrane. Residues 99–106 (SLSEYVLL) are important for ligand-binding. The C-terminal hydrophobic region stretch occupies residues 177–223 (VIPSTLGFALADTVFSTQDFLTLFYTLRAYARGLRLELTTYLFGQDA).

The protein belongs to the ERG2 family. Homotrimer. Forms a ternary complex with ANK2 and ITPR3. The complex is disrupted by agonists. Interacts with KCNA4. Interacts with KCNA2; cocaine consumption leads to increased interaction. Interacts with RNF112 in an oxidative stress-regulated manner.

The protein localises to the nucleus inner membrane. It localises to the nucleus outer membrane. Its subcellular location is the nucleus envelope. It is found in the cytoplasmic vesicle. The protein resides in the endoplasmic reticulum membrane. The protein localises to the membrane. It localises to the lipid droplet. Its subcellular location is the cell junction. It is found in the cell membrane. The protein resides in the cell projection. The protein localises to the growth cone. It localises to the postsynaptic density membrane. In terms of biological role, functions in lipid transport from the endoplasmic reticulum and is involved in a wide array of cellular functions probably through regulation of the biogenesis of lipid microdomains at the plasma membrane. Involved in the regulation of different receptors it plays a role in BDNF signaling and EGF signaling. Also regulates ion channels like the potassium channel and could modulate neurotransmitter release. Plays a role in calcium signaling through modulation together with ANK2 of the ITP3R-dependent calcium efflux at the endoplasmic reticulum. Plays a role in several other cell functions including proliferation, survival and death. Originally identified for its ability to bind various psychoactive drugs it is involved in learning processes, memory and mood alteration. Necessary for proper mitochondrial axonal transport in motor neurons, in particular the retrograde movement of mitochondria. Plays a role in protecting cells against oxidative stress-induced cell death via its interaction with RNF112. The sequence is that of Sigma non-opioid intracellular receptor 1 (SIGMAR1) from Bos taurus (Bovine).